A 117-amino-acid polypeptide reads, in one-letter code: Holo-[acyl-carrier-protein] synthase (117 aa).

Mg(2+) is bound by residues D6 and E55.

The protein belongs to the P-Pant transferase superfamily. AcpS family. Mg(2+) is required as a cofactor.

Its subcellular location is the cytoplasm. It carries out the reaction apo-[ACP] + CoA = holo-[ACP] + adenosine 3',5'-bisphosphate + H(+). In terms of biological role, transfers the 4'-phosphopantetheine moiety from coenzyme A to a Ser of acyl-carrier-protein. This Chlorobaculum tepidum (strain ATCC 49652 / DSM 12025 / NBRC 103806 / TLS) (Chlorobium tepidum) protein is Holo-[acyl-carrier-protein] synthase.